The sequence spans 278 residues: Outer spore wall protein 1 (278 aa).

It is found in the spore wall. May be involved in a late step of spore wall assembly. This chain is Outer spore wall protein 1 (OSW1), found in Saccharomyces cerevisiae (strain ATCC 204508 / S288c) (Baker's yeast).